The primary structure comprises 92 residues: Small ribosomal subunit protein uS19 (92 aa).

The protein belongs to the universal ribosomal protein uS19 family.

Protein S19 forms a complex with S13 that binds strongly to the 16S ribosomal RNA. The chain is Small ribosomal subunit protein uS19 from Shewanella putrefaciens (strain CN-32 / ATCC BAA-453).